A 47-amino-acid polypeptide reads, in one-letter code: Large ribosomal subunit protein bL34 (47 aa).

The protein belongs to the bacterial ribosomal protein bL34 family.

This Rhodococcus opacus (strain B4) protein is Large ribosomal subunit protein bL34.